Reading from the N-terminus, the 243-residue chain is Leucyl/phenylalanyl-tRNA--protein transferase (243 aa).

Residues 1 to 22 (MHSQPYLLSPTPNTPFPPAEHA) form a disordered region.

The protein belongs to the L/F-transferase family.

Its subcellular location is the cytoplasm. It catalyses the reaction N-terminal L-lysyl-[protein] + L-leucyl-tRNA(Leu) = N-terminal L-leucyl-L-lysyl-[protein] + tRNA(Leu) + H(+). The catalysed reaction is N-terminal L-arginyl-[protein] + L-leucyl-tRNA(Leu) = N-terminal L-leucyl-L-arginyl-[protein] + tRNA(Leu) + H(+). The enzyme catalyses L-phenylalanyl-tRNA(Phe) + an N-terminal L-alpha-aminoacyl-[protein] = an N-terminal L-phenylalanyl-L-alpha-aminoacyl-[protein] + tRNA(Phe). Functionally, functions in the N-end rule pathway of protein degradation where it conjugates Leu, Phe and, less efficiently, Met from aminoacyl-tRNAs to the N-termini of proteins containing an N-terminal arginine or lysine. The sequence is that of Leucyl/phenylalanyl-tRNA--protein transferase from Xylella fastidiosa (strain M23).